Reading from the N-terminus, the 245-residue chain is UPF0246 protein CE1889 (245 aa).

The disordered stretch occupies residues 1 to 20 (MLILLPPSETKTPGGAGAPL).

It belongs to the UPF0246 family.

The sequence is that of UPF0246 protein CE1889 from Corynebacterium efficiens (strain DSM 44549 / YS-314 / AJ 12310 / JCM 11189 / NBRC 100395).